A 140-amino-acid polypeptide reads, in one-letter code: Ribonucleases P/MRP protein subunit POP7 (140 aa).

A disordered region spans residues 1–21; that stretch reads MALKKNTHNKSTKRVTKHPSL. Ser115 is modified (phosphoserine).

Belongs to the histone-like Alba family. In terms of assembly, component of nuclear RNase P and RNase MRP complexes. RNase P consists of an RNA moiety and at least 9 protein subunits including POP1, POP3, POP4, POP5, POP6, POP7, POP8, RPP1 and RPR2. RNase MRP complex consists of an RNA moiety and at least 10 protein subunits including POP1, POP3, POP4, POP5, POP6, POP7, POP8, RMP1, RPP1 and SNM1, many of which are shared with the RNase P complex.

The protein localises to the nucleus. The enzyme catalyses Endonucleolytic cleavage of RNA, removing 5'-extranucleotides from tRNA precursor.. Component of ribonuclease P, a protein complex that generates mature tRNA molecules by cleaving their 5'-ends. Also a component of RNase MRP, which cleaves pre-rRNA sequences. This is Ribonucleases P/MRP protein subunit POP7 (POP7) from Saccharomyces cerevisiae (strain ATCC 204508 / S288c) (Baker's yeast).